Consider the following 97-residue polypeptide: MKAIVFVLIFAVAFAVTLRQGPIVCNLCTGLINTLENLLTTKGADKVKDYIDSLCNKASGFIATLCTKVLDFGVDKLIQLIEDKVDANAICAKIHAC.

A signal peptide spans 1–20; it reads MKAIVFVLIFAVAFAVTLRQ. Positions 21-97 constitute a Saposin B-type domain; the sequence is GPIVCNLCTG…NAICAKIHAC (77 aa). Disulfide bonds link cysteine 25-cysteine 97, cysteine 28-cysteine 91, and cysteine 55-cysteine 66.

Monomer. Homodimer. Hexamer; formed during insertion in the membrane.

Its subcellular location is the cytoplasmic granule. Forms pores in the cell membrane of host cells. Implicated in the cytolytic activity of the parasite. Pore forming activity is lower compared to the activity of ameobapore A from the pathogenic strain HM-1:IMSS. The protein is Non-pathogenic pore-forming peptide amoebapore A of Entamoeba histolytica.